The primary structure comprises 306 residues: Pantothenate kinase (306 aa).

ATP is bound at residue 90-97; it reads GSVAVGKS.

The protein belongs to the prokaryotic pantothenate kinase family.

It is found in the cytoplasm. The catalysed reaction is (R)-pantothenate + ATP = (R)-4'-phosphopantothenate + ADP + H(+). Its pathway is cofactor biosynthesis; coenzyme A biosynthesis; CoA from (R)-pantothenate: step 1/5. In Listeria welshimeri serovar 6b (strain ATCC 35897 / DSM 20650 / CCUG 15529 / CIP 8149 / NCTC 11857 / SLCC 5334 / V8), this protein is Pantothenate kinase.